We begin with the raw amino-acid sequence, 233 residues long: LexA repressor (233 aa).

The segment at residues 26-46 (FDEMKEALDLRSKSGIHRLIT) is a DNA-binding region (H-T-H motif). Active-site for autocatalytic cleavage activity residues include Ser154 and Lys192.

The protein belongs to the peptidase S24 family. In terms of assembly, homodimer.

It carries out the reaction Hydrolysis of Ala-|-Gly bond in repressor LexA.. Its function is as follows. Represses a number of genes involved in the response to DNA damage (SOS response), including recA and lexA. In the presence of single-stranded DNA, RecA interacts with LexA causing an autocatalytic cleavage which disrupts the DNA-binding part of LexA, leading to derepression of the SOS regulon and eventually DNA repair. In Roseobacter denitrificans (strain ATCC 33942 / OCh 114) (Erythrobacter sp. (strain OCh 114)), this protein is LexA repressor.